A 91-amino-acid polypeptide reads, in one-letter code: Histone H1, sperm (91 aa).

A disordered region spans residues 1–25; the sequence is PGSPQKRAASPRKSPRKGSPKKSPM. Residues 9–20 show a composition bias toward basic residues; sequence ASPRKSPRKGSP. The region spanning 18–91 is the H15 domain; the sequence is GSPKKSPMIR…TGATGRFRVG (74 aa).

Belongs to the histone H1/H5 family.

The protein localises to the nucleus. The protein resides in the chromosome. Its function is as follows. Histones H1 are necessary for the condensation of nucleosome chains into higher-order structures. In Sphaerechinus granularis (Purple sea urchin), this protein is Histone H1, sperm.